A 792-amino-acid chain; its full sequence is Ribonucleoside-diphosphate reductase large subunit (792 aa).

The region spanning 1-92 (MHVIKRDGRQ…VSNLHKETKK (92 aa)) is the ATP-cone domain. Residues 5–6 (KR), 11–17 (ERVMFDK), T53, and D57 each bind ATP. Residue K17 is modified to N6-acetyllysine. GDP contacts are provided by S202 and S217. An intrachain disulfide couples C218 to C444. DTTP is bound by residues 226–228 (DSI), K243, R256, and 263–264 (AG). N6-acetyllysine is present on K376. N427 is a GDP binding site. N427 functions as the Proton acceptor in the catalytic mechanism. C429 functions as the Cysteine radical intermediate in the catalytic mechanism. GDP-binding positions include E431 and 604-607 (TAST). E431 serves as the catalytic Proton acceptor. At T751 the chain carries Phosphothreonine.

The protein belongs to the ribonucleoside diphosphate reductase large chain family. As to quaternary structure, heterodimer of a large and a small subunit. Heterodimer with small subunit RRM2 or RRM2B. The heterodimer with RRM2 has higher catalytic activity than the heterodimer with RRM2B. Interacts with AHCYL1 which inhibits its activity.

The protein localises to the cytoplasm. The enzyme catalyses a 2'-deoxyribonucleoside 5'-diphosphate + [thioredoxin]-disulfide + H2O = a ribonucleoside 5'-diphosphate + [thioredoxin]-dithiol. Under complex allosteric control mediated by deoxynucleoside triphosphates and ATP binding to separate specificity and activation sites on the M1 subunit. The type of nucleotide bound at the specificity site determines substrate preference. It seems probable that ATP makes the enzyme reduce CDP and UDP, dGTP favors ADP reduction and dTTP favors GDP reduction. Stimulated by ATP and inhibited by dATP binding to the activity site, the dATP inhibition is mediated by AHCYL1 which stabilizes dATP in the site. Its function is as follows. Provides the precursors necessary for DNA synthesis. Catalyzes the biosynthesis of deoxyribonucleotides from the corresponding ribonucleotides. The polypeptide is Ribonucleoside-diphosphate reductase large subunit (RRM1) (Homo sapiens (Human)).